Reading from the N-terminus, the 290-residue chain is Light-independent protochlorophyllide reductase iron-sulfur ATP-binding protein (290 aa).

ATP-binding positions include 10 to 15 and lysine 39; that span reads GIGKST. Position 14 (serine 14) interacts with Mg(2+). Cysteine 95 and cysteine 129 together coordinate [4Fe-4S] cluster. Residue 180–181 participates in ATP binding; that stretch reads NR.

It belongs to the NifH/BchL/ChlL family. As to quaternary structure, homodimer. Protochlorophyllide reductase is composed of three subunits; ChlL, ChlN and ChlB. The cofactor is [4Fe-4S] cluster.

The protein localises to the plastid. Its subcellular location is the chloroplast. It carries out the reaction chlorophyllide a + oxidized 2[4Fe-4S]-[ferredoxin] + 2 ADP + 2 phosphate = protochlorophyllide a + reduced 2[4Fe-4S]-[ferredoxin] + 2 ATP + 2 H2O. Its pathway is porphyrin-containing compound metabolism; chlorophyll biosynthesis (light-independent). Its function is as follows. Component of the dark-operative protochlorophyllide reductase (DPOR) that uses Mg-ATP and reduced ferredoxin to reduce ring D of protochlorophyllide (Pchlide) to form chlorophyllide a (Chlide). This reaction is light-independent. The L component serves as a unique electron donor to the NB-component of the complex, and binds Mg-ATP. The polypeptide is Light-independent protochlorophyllide reductase iron-sulfur ATP-binding protein (Pyropia yezoensis (Susabi-nori)).